The chain runs to 182 residues: Heat shock protein beta-2 (182 aa).

A sHSP domain is found at 55 to 163; it reads RAGEGARAGA…DTEVNEVYIS (109 aa).

This sequence belongs to the small heat shock protein (HSP20) family. As to quaternary structure, interacts with DMPK; may enhance its kinase activity.

It localises to the cytoplasm. It is found in the nucleus. May regulate the kinase DMPK. The sequence is that of Heat shock protein beta-2 (Hspb2) from Mus musculus (Mouse).